A 411-amino-acid polypeptide reads, in one-letter code: tRNA (uracil(54)-C(5))-methyltransferase (411 aa).

Cysteine 62, cysteine 68, cysteine 71, and cysteine 138 together coordinate [4Fe-4S] cluster. S-adenosyl-L-methionine contacts are provided by residues glutamine 254, tyrosine 280, threonine 285, 301-302 (DS), aspartate 328, and aspartate 342. Cysteine 369 (nucleophile) is an active-site residue. Glutamate 402 acts as the Proton acceptor in catalysis.

Belongs to the class I-like SAM-binding methyltransferase superfamily. RNA M5U methyltransferase family.

The catalysed reaction is uridine(54) in tRNA + S-adenosyl-L-methionine = 5-methyluridine(54) in tRNA + S-adenosyl-L-homocysteine + H(+). Functionally, catalyzes the formation of 5-methyl-uridine at position 54 (m5U54) in tRNA. The sequence is that of tRNA (uracil(54)-C(5))-methyltransferase from Pyrococcus furiosus (strain ATCC 43587 / DSM 3638 / JCM 8422 / Vc1).